The sequence spans 384 residues: MSWQDKINAALDARRAADALRRRYPVAQGAGRWLVADDRQYLNFSSNDYLGLSHHPQIIRAWKLGAEQFGVGSGGSGHVSGYSVAHQVLEEELAEWLGYSRALLFISGFAANQAVIAAMMAKEDRIVADRLSHASLLEAASLSPSPLRRFAHNDVTHLARLLASPCPGQQLVVTEGVFSMDGDSAPLEEIQQVTQQHDGWLMVDDAHGTGVIGEQGRGSCWLQKVKPELLVVTFGKGFGVSGAAVLCSNTVADYLLQFARHLIYSTSMPPAQAQALRASLAVIRSDEGDARREKLVSLIARFRAGVQDLPFTLADSCSAIQPLIVGDNSRALQLAEKLRQQGCWVTAIRPPTVPAGTARLRLTLTAAHEMQDIDRLLEVLHGND.

Substrate is bound at residue Arg-21. A pyridoxal 5'-phosphate-binding site is contributed by 108–109; sequence GF. His-133 lines the substrate pocket. Ser-179, His-207, and Thr-233 together coordinate pyridoxal 5'-phosphate. Lys-236 is modified (N6-(pyridoxal phosphate)lysine). Residue Thr-352 participates in substrate binding.

It belongs to the class-II pyridoxal-phosphate-dependent aminotransferase family. BioF subfamily. Homodimer. Requires pyridoxal 5'-phosphate as cofactor.

It carries out the reaction 6-carboxyhexanoyl-[ACP] + L-alanine + H(+) = (8S)-8-amino-7-oxononanoate + holo-[ACP] + CO2. The protein operates within cofactor biosynthesis; biotin biosynthesis. In terms of biological role, catalyzes the decarboxylative condensation of pimeloyl-[acyl-carrier protein] and L-alanine to produce 8-amino-7-oxononanoate (AON), [acyl-carrier protein], and carbon dioxide. This is 8-amino-7-oxononanoate synthase from Escherichia coli O7:K1 (strain IAI39 / ExPEC).